We begin with the raw amino-acid sequence, 167 residues long: Endoribonuclease YbeY (167 aa).

Zn(2+)-binding residues include His131, His135, and His141.

The protein belongs to the endoribonuclease YbeY family. Requires Zn(2+) as cofactor.

It is found in the cytoplasm. In terms of biological role, single strand-specific metallo-endoribonuclease involved in late-stage 70S ribosome quality control and in maturation of the 3' terminus of the 16S rRNA. The chain is Endoribonuclease YbeY from Rickettsia akari (strain Hartford).